Reading from the N-terminus, the 197-residue chain is Small ribosomal subunit protein uS11m (197 aa).

Residues 43-52 (AAKEEVEKAE) are compositionally biased toward basic and acidic residues. The segment at 43-66 (AAKEEVEKAETPAPAPSRSSFSIY) is disordered.

The protein belongs to the universal ribosomal protein uS11 family. Component of the mitochondrial ribosome small subunit (28S) which comprises a 12S rRNA and about 30 distinct proteins.

It is found in the mitochondrion. The chain is Small ribosomal subunit protein uS11m (MRPS11) from Bos taurus (Bovine).